The chain runs to 1105 residues: Serine/threonine-protein kinase 4 homolog B (1105 aa).

The 252-residue stretch at 23–274 (FDLIECLGRG…AKDLLKHSFF (252 aa)) folds into the Protein kinase domain. ATP-binding positions include 29-37 (LGRGSFGSV) and Lys-52. The active-site Proton acceptor is Asp-142. 3 disordered regions span residues 348–396 (STQI…TKNN), 411–482 (SSSA…RQPA), and 495–541 (PSFG…SLPL). 2 stretches are compositionally biased toward low complexity: residues 358–396 (QAQQ…TKNN) and 411–437 (SSSA…TTTN). Residues 438–458 (DYHTGNGRTSSSSPQFGLQHQ) show a composition bias toward polar residues. Composition is skewed to low complexity over residues 459 to 473 (NSSN…TVPS) and 513 to 541 (PIGS…SLPL). The interval 516–1105 (SPITKRPTPT…SEFDLDFYNN (590 aa)) is calpain-like cysteine protease-like. 4 domain III regions span residues 641-668 (EVSA…EGSF), 791-830 (VHTQ…QGSI), 836-972 (SEQI…NVIQ), and 1076-1103 (VVIP…LDFY).

The protein in the N-terminal section; belongs to the protein kinase superfamily. STE Ser/Thr protein kinase family. STE20 subfamily. This sequence in the C-terminal section; belongs to the peptidase C2 family. Requires Mn(2+) as cofactor.

It catalyses the reaction L-seryl-[protein] + ATP = O-phospho-L-seryl-[protein] + ADP + H(+). The enzyme catalyses L-threonyl-[protein] + ATP = O-phospho-L-threonyl-[protein] + ADP + H(+). Its function is as follows. Probable serine/threonine-protein kinase. The protein is Serine/threonine-protein kinase 4 homolog B (krsB) of Dictyostelium discoideum (Social amoeba).